The sequence spans 674 residues: Xaa-Pro aminopeptidase 2 (674 aa).

Residues 1–22 (MAQAYWQCYPWLVLLCACAWSY) form the signal peptide. N-linked (GlcNAc...) asparagine glycosylation is present at asparagine 65. Arginine 116 serves as a coordination point for substrate. N-linked (GlcNAc...) asparagine glycosylation is found at asparagine 278 and asparagine 293. A substrate-binding site is contributed by histidine 430. Aspartate 450, aspartate 461, and histidine 524 together coordinate Zn(2+). Residues histidine 524, histidine 533, and glutamate 555 each contribute to the substrate site. Zn(2+) contacts are provided by glutamate 555 and glutamate 569. A lipid anchor (GPI-anchor amidated alanine) is attached at alanine 650. The propeptide at 651 to 674 (SAPHTTSLASMWVASALAILSWSC) is removed in mature form.

Belongs to the peptidase M24B family. As to quaternary structure, homotrimer. The cofactor is Zn(2+). Post-translationally, N-glycosylated. As to expression, expressed strongly in lung, liver and heart, and at lower levels in kidney, testis, brain, spleen and skeletal muscle.

Its subcellular location is the cell membrane. It catalyses the reaction Release of any N-terminal amino acid, including proline, that is linked to proline, even from a dipeptide or tripeptide.. Inhibited by the chelating agents 1,10-phenanthroline and EDTA. Inhibited by the thiol-containing compounds 2-mercaptoethanol and dithiothreitol. Also inhibited by apstatin, captopril and p-(ch1oromercuri)benzenesulfonic acid. Weakly inhibited by D,L-2-mercaptomethyl-3-guanidinoethylthiopropanoic acid and N-[l-(R,S)-carboxy-(2-phenylethyl)]-Ala-Ala-Phe-p-aminobenzoate. Inhibited by ramiprilat and enalaprilat, in a Mn(2+)-dependent manner. Metal ions have a complex substrate- and concentration-dependent effect on activity. Activity towards Arg-Pro-Pro and Gly-Pro-Hyp is stimulated by Mn(2+) ion concentrations of 10-100 uM and then inhibited at Mn(2+) concentrations of 1-2 mM. Mn(2+) concentrations in excess of 2 mM stimulate activity towards Gly-Pro-Hyp but inhibit activity towards Arg-Pro-Pro. Zn(2+) and Co(2+) ions also inhibit activity towards Arg-Pro-Pro at high concentrations. Activity towards bradykinin is inhibited by Mn(2+) concentrations in excess of 1 mM. Membrane-bound metalloprotease which catalyzes the removal of a penultimate prolyl residue from the N-termini of peptides, such as Arg-Pro-Pro. May play a role in the metabolism of the vasodilator bradykinin. In Rattus norvegicus (Rat), this protein is Xaa-Pro aminopeptidase 2.